The following is a 59-amino-acid chain: Protein translocase subunit SecE (59 aa).

Residues 37-57 form a helical membrane-spanning segment; it reads GIGIIIIGVIGFIISIIAQLL.

The protein belongs to the SecE/SEC61-gamma family. Component of the Sec protein translocase complex. Heterotrimer consisting of SecY (alpha), SecG (beta) and SecE (gamma) subunits. The heterotrimers can form oligomers, although 1 heterotrimer is thought to be able to translocate proteins. Interacts with the ribosome. May interact with SecDF, and other proteins may be involved.

Its subcellular location is the cell membrane. Its function is as follows. Essential subunit of the Sec protein translocation channel SecYEG. Clamps together the 2 halves of SecY. May contact the channel plug during translocation. The chain is Protein translocase subunit SecE from Methanothermobacter thermautotrophicus (strain ATCC 29096 / DSM 1053 / JCM 10044 / NBRC 100330 / Delta H) (Methanobacterium thermoautotrophicum).